Consider the following 972-residue polypeptide: MASNNVAQFAAELKMPAGVLLEQLQAAGVQKASEDDALSEADKARLLDHLRKSHGATDGDKRKITLTRKHTSEIKQSDATGKARTIQVEVRKKRTFVKRDDVAEGAEQGQAQVAEADDDAELKRREEEARREAELLEKQAQELRERQERLEREEAERRAREEAAEAERRRAEEEAAAKRAAAAAVEAQQAAAQQAAEAQQETAGAQSAQDEARAAAERAAQREAAKKAEDAAREAADKTRAEQEEIRKRREAAEAEARAIREMMNTPRKAVVKAVEPPKPVEPPKPVEAKGTLHKPAKPAGAGAARPAVKKPAGAAPATTQAPAGAGDRNKKPGGGKGGWQDDAAKRRGIKTRGDSSGGVDRGWRGGPKGRGRHQDSASTFQAPTEPIVREVHVPETVSVADLAHKMSIKASEVIKVMMKMGQMVTINQVLDQETAMIVVEELGHRAVAAKLDDPEALLVEGEATTDAEQLPRPPVVTVMGHVDHGKTSLLDHIRRAKVAAGEAGGITQHIGAYHVETPRGVITFLDTPGHEAFTAMRARGAKATDIVVLVVAADDGVMPQTKEAIAHAKAGGVPIVVAINKIDKPEANPDRVKQELVAEGVVPEEYGGDSPFVPVSAKTGVGIDDLLENVLLQAEVLELKAPIEAPAKGIVIEAKLDKGKGPVATILVQSGTLNRGDVVLAGSAYGRVRAMLDENGKPTKEAGPSIPVEIQGLSEVPGAGEEVIVLPDERKAREIALFRQGKFRDVKLAKQQAAKLESMLEQMGEGEVQNLPLIIKADVQGSQEALVQSLLKLSTDEVRVQIVHSAVGGISENDVNLATASKAVIIGFNTRADAQARKLAESNGIDIRYYNIIYDAVDEVKAAMSGMLAPEKREVITGMVEVRQVFKVPKIGTVAGCMVTDGIVKRSSSVRVLRNNVVIFTGELESLKRFKDDVKEVKQGFECGMSVKNFNDVIEGDQFEVFEVTEVARTL.

A compositionally biased stretch (basic and acidic residues) spans 49–63; it reads HLRKSHGATDGDKRK. Disordered stretches follow at residues 49-86 and 100-383; these read HLRK…ARTI and DDVA…TFQA. The span at 105 to 114 shows a compositional bias: low complexity; that stretch reads GAEQGQAQVA. A compositionally biased stretch (basic and acidic residues) spans 121-177; it reads ELKRREEEARREAELLEKQAQELRERQERLEREEAERRAREEAAEAERRRAEEEAAA. The span at 178–209 shows a compositional bias: low complexity; it reads KRAAAAAVEAQQAAAQQAAEAQQETAGAQSAQ. The span at 210–261 shows a compositional bias: basic and acidic residues; that stretch reads DEARAAAERAAQREAAKKAEDAAREAADKTRAEQEEIRKRREAAEAEARAIR. The segment covering 277–286 has biased composition (pro residues); sequence PPKPVEPPKP. A compositionally biased stretch (low complexity) spans 298–327; the sequence is KPAGAGAARPAVKKPAGAAPATTQAPAGAG. Gly residues predominate over residues 356–369; sequence SSGGVDRGWRGGPK. Residues 472-641 enclose the tr-type G domain; it reads PRPPVVTVMG…LLQAEVLELK (170 aa). The interval 481–488 is G1; it reads GHVDHGKT. 481-488 contacts GTP; the sequence is GHVDHGKT. The tract at residues 506-510 is G2; it reads GITQH. Positions 527–530 are G3; it reads DTPG. Residues 527–531 and 581–584 each bind GTP; these read DTPGH and NKID. The tract at residues 581 to 584 is G4; that stretch reads NKID. The tract at residues 617 to 619 is G5; the sequence is SAK.

It belongs to the TRAFAC class translation factor GTPase superfamily. Classic translation factor GTPase family. IF-2 subfamily.

The protein localises to the cytoplasm. Its function is as follows. One of the essential components for the initiation of protein synthesis. Protects formylmethionyl-tRNA from spontaneous hydrolysis and promotes its binding to the 30S ribosomal subunits. Also involved in the hydrolysis of GTP during the formation of the 70S ribosomal complex. This is Translation initiation factor IF-2 from Burkholderia ambifaria (strain MC40-6).